Consider the following 304-residue polypeptide: MTEQNQQPKTYCGFIAIVGRPNVGKSTLLNKILGQKISITSRKAQTTRHRIVGIHTEDQYQAIYVDTPGLHIEEKRAINRLMNRAASSAIGDVDLIIFVVEGTKWTDDDEMVLNKLRAAKAPVVLAINKVDNIKEKDELLPHITELSQKFDFAEILPISAQRGKNVHILQKIVRKSLREGVHHFPEEYVTDRSQRFMASEIIREKLMRFTGEELPYSVTVEIEQFKLNERGTYEINGLILVEREGQKKMVIGVKGQKIKTIGMEARADMERLFDNKVHLELWVKVKAGWADDERALRSLGYMDE.

In terms of domain architecture, Era-type G spans 11 to 179; that stretch reads YCGFIAIVGR…QKIVRKSLRE (169 aa). A G1 region spans residues 19-26; that stretch reads GRPNVGKS. 19–26 contacts GTP; it reads GRPNVGKS. The interval 45 to 49 is G2; that stretch reads QTTRH. The tract at residues 66-69 is G3; sequence DTPG. Residues 66–70 and 128–131 contribute to the GTP site; these read DTPGL and NKVD. Positions 128–131 are G4; sequence NKVD. Residues 158–160 form a G5 region; it reads ISA. Residues 210-287 enclose the KH type-2 domain; the sequence is TGEELPYSVT…HLELWVKVKA (78 aa).

This sequence belongs to the TRAFAC class TrmE-Era-EngA-EngB-Septin-like GTPase superfamily. Era GTPase family. Monomer.

It is found in the cytoplasm. Its subcellular location is the cell inner membrane. Its function is as follows. An essential GTPase that binds both GDP and GTP, with rapid nucleotide exchange. Plays a role in 16S rRNA processing and 30S ribosomal subunit biogenesis and possibly also in cell cycle regulation and energy metabolism. The sequence is that of GTPase Era from Actinobacillus pleuropneumoniae serotype 3 (strain JL03).